The sequence spans 32 residues: Unknown protein from spot 206 of 2D-PAGE of etiolated coleoptile (32 aa).

In Zea mays (Maize), this protein is Unknown protein from spot 206 of 2D-PAGE of etiolated coleoptile.